Consider the following 1331-residue polypeptide: DNA-directed RNA polymerase subunit beta' (1331 aa).

Zn(2+) is bound by residues Cys220, Cys293, Cys300, and Cys303. Disordered stretches follow at residues 1236-1257 (DFVD…TNDN) and 1294-1331 (ISGD…MKDQ). Positions 1243–1257 (SRSPNGYSNVVTNDN) are enriched in polar residues.

This sequence belongs to the RNA polymerase beta' chain family. RpoC2 subfamily. As to quaternary structure, in cyanobacteria the RNAP catalytic core is composed of 2 alpha, 1 beta, 1 beta', 1 gamma and 1 omega subunit. When a sigma factor is associated with the core the holoenzyme is formed, which can initiate transcription. Zn(2+) serves as cofactor.

The enzyme catalyses RNA(n) + a ribonucleoside 5'-triphosphate = RNA(n+1) + diphosphate. DNA-dependent RNA polymerase catalyzes the transcription of DNA into RNA using the four ribonucleoside triphosphates as substrates. The protein is DNA-directed RNA polymerase subunit beta' of Picosynechococcus sp. (strain ATCC 27264 / PCC 7002 / PR-6) (Agmenellum quadruplicatum).